A 92-amino-acid polypeptide reads, in one-letter code: Small ribosomal subunit protein uS19c (92 aa).

Belongs to the universal ribosomal protein uS19 family.

The protein resides in the plastid. The protein localises to the chloroplast. Functionally, protein S19 forms a complex with S13 that binds strongly to the 16S ribosomal RNA. This Panax ginseng (Korean ginseng) protein is Small ribosomal subunit protein uS19c.